A 429-amino-acid polypeptide reads, in one-letter code: MMNPRRLPPLPSSTSSASAADDMDPRVWRRLPQPLVDRILACLPTPSFLRLRAACRRFYHLLFSSPFLHSHLLLSPHLPFFAFVVPAAGHLLLLDPTATASWSRLPLPLPPVAGGPAAFSPAAASAGLLAFLSDASGHKTLLLANPITRLLAALPISPTPRLSPTVGLAAGPTSIIAVVAGDDLVSPFAVKNISADTFVADAASVPPSGFWAPSSLLPRLSSLDPRAGMAFASGRFYCMSSSPFAVLVFDVAENVWSKVQPPMRRFLRSPALVELGGGREGAARVALVSAVEKSRLSVPRSVRLWTLRGGGGGGGGGAWTEVARMPPEVHAQFAAAEGGRGFECAAHGDYVVLAPRGPVAQAPTSALVFDSRRDEWRWAPPCPYVVVAHHGGAGAAGFRVFAYEPRLATPAIGLLDATAPVALHGMHDG.

Over residues 1–11 (MMNPRRLPPLP) the composition is skewed to pro residues. Residues 1–21 (MMNPRRLPPLPSSTSSASAAD) form a disordered region. Residues 25–71 (PRVWRRLPQPLVDRILACLPTPSFLRLRAACRRFYHLLFSSPFLHSH) form the F-box domain. 2 consecutive transmembrane segments (helical) span residues 72-92 (LLLS…GHLL) and 112-132 (VAGG…LAFL). 3 Kelch repeats span residues 229–277 (MAFA…ELGG), 284–339 (RVAL…AEGG), and 350–397 (YVVL…GAAG).

Part of a putative SCF (ASK/Cullin/F-box) ubiquitin ligase complex. Interacts with FL/APO2. As to expression, expressed in apical meristems and the lateral organ primordia throughout development. Expressed in seedlings, roots, leaves, shoot apical meristem (SAM), developing panicles, and, at lower levels, in developing seeds.

It is found in the membrane. Its pathway is protein modification; protein ubiquitination. Component of SCF(ASK-cullin-F-box) E3 ubiquitin ligase complexes, which may mediate the ubiquitination and subsequent proteasomal degradation of target proteins. Together with FL/APO2, involved in the temporal regulation of meristem identity during both vegetative and reproductive developments in an APO2-dependent manner. Promotes spikelet formation by suppressing the precocious conversion of inflorescence meristems to spikelet meristems, probably via a positive regulation of class-C floral homeotic genes, but not of class-B genes, and through the control of cell proliferation in meristems. Mediates culm development and strength/diameter enhancement at internodes. Required for the regulation of the plastochron, floral organ identity, and floral determinacy. Controls the number of primary rachis branches (PRBs). May trigger the formation of vascular bundle systems which, consequently, promote carbohydrate translocation to panicles. Involved in ozone-induced grain yield regulation. The sequence is that of Protein ABERRANT PANICLE ORGANIZATION 1 from Oryza sativa subsp. japonica (Rice).